A 618-amino-acid polypeptide reads, in one-letter code: DNA mismatch repair protein MutL (618 aa).

The span at 366–378 shows a compositional bias: low complexity; it reads AEPTAAREPATPR. Positions 366–403 are disordered; it reads AEPTAAREPATPRYSDGASGGNGGRQSAGGWPHAQPGY. Positions 383–392 are enriched in gly residues; sequence ASGGNGGRQS.

Belongs to the DNA mismatch repair MutL/HexB family.

Its function is as follows. This protein is involved in the repair of mismatches in DNA. It is required for dam-dependent methyl-directed DNA mismatch repair. May act as a 'molecular matchmaker', a protein that promotes the formation of a stable complex between two or more DNA-binding proteins in an ATP-dependent manner without itself being part of a final effector complex. This Salmonella typhi protein is DNA mismatch repair protein MutL.